A 79-amino-acid polypeptide reads, in one-letter code: Small ribosomal subunit protein uS17 (79 aa).

This sequence belongs to the universal ribosomal protein uS17 family. In terms of assembly, part of the 30S ribosomal subunit.

Functionally, one of the primary rRNA binding proteins, it binds specifically to the 5'-end of 16S ribosomal RNA. The chain is Small ribosomal subunit protein uS17 from Paramagnetospirillum magneticum (strain ATCC 700264 / AMB-1) (Magnetospirillum magneticum).